The sequence spans 75 residues: Guanine nucleotide-binding protein G(I)/G(S)/G(O) subunit gamma-3 (75 aa).

Threonine 5 is modified (phosphothreonine). Residue serine 9 is modified to Phosphoserine. A Phosphothreonine modification is found at threonine 10. Serine 12 carries the phosphoserine modification. At cysteine 72 the chain carries Cysteine methyl ester. Residue cysteine 72 is the site of S-geranylgeranyl cysteine attachment. Residues 73–75 (ALL) constitute a propeptide, removed in mature form.

The protein belongs to the G protein gamma family. G proteins are composed of 3 units, alpha, beta and gamma. Forms a complex with GNAO1 and GNB1. Interacts with SCN8A. Abundantly expressed in brain. Low levels in testis.

The protein localises to the cell membrane. Its function is as follows. Guanine nucleotide-binding proteins (G proteins) are involved as a modulator or transducer in various transmembrane signaling systems. The beta and gamma chains are required for the GTPase activity, for replacement of GDP by GTP, and for G protein-effector interaction. The sequence is that of Guanine nucleotide-binding protein G(I)/G(S)/G(O) subunit gamma-3 (GNG3) from Bos taurus (Bovine).